The primary structure comprises 95 residues: Small ribosomal subunit protein bS20c (95 aa).

A disordered region spans residues 76-95 (NGSAKKAKLTKRLKEKKISL). Positions 80–95 (KKAKLTKRLKEKKISL) are enriched in basic residues.

It belongs to the bacterial ribosomal protein bS20 family.

The protein resides in the plastid. The protein localises to the chloroplast. Functionally, binds directly to 16S ribosomal RNA. The sequence is that of Small ribosomal subunit protein bS20c from Guillardia theta (Cryptophyte).